Consider the following 576-residue polypeptide: CTP synthase (576 aa).

The 255-residue stretch at 305 to 559 (QIALVGKYTH…LGLVAAAANI (255 aa)) folds into the Glutamine amidotransferase type-1 domain. Active-site for GATase activity residues include Cys404, His535, and Glu537.

It belongs to the CTP synthase family.

It carries out the reaction UTP + L-glutamine + ATP + H2O = CTP + L-glutamate + ADP + phosphate + 2 H(+). Its pathway is pyrimidine metabolism; CTP biosynthesis via de novo pathway; CTP from UDP: step 2/2. In terms of biological role, catalyzes the ATP-dependent amination of UTP to CTP with either L-glutamine or ammonia as the source of nitrogen. The protein is CTP synthase (URA7) of Eremothecium gossypii (strain ATCC 10895 / CBS 109.51 / FGSC 9923 / NRRL Y-1056) (Yeast).